We begin with the raw amino-acid sequence, 458 residues long: tRNA-2-methylthio-N(6)-dimethylallyladenosine synthase (458 aa).

The MTTase N-terminal domain occupies 2–118 (PKLYIKTYGC…VFEHVDGILR (117 aa)). [4Fe-4S] cluster is bound by residues Cys11, Cys47, Cys81, Cys170, Cys174, and Cys177. The Radical SAM core domain maps to 156-389 (PGVRSTAYVS…LAVVNEIAIR (234 aa)). One can recognise a TRAM domain in the interval 392–455 (RDLVGTVQEV…GFTLYGVPCP (64 aa)).

It belongs to the methylthiotransferase family. MiaB subfamily. As to quaternary structure, monomer. It depends on [4Fe-4S] cluster as a cofactor.

The protein localises to the cytoplasm. The enzyme catalyses N(6)-dimethylallyladenosine(37) in tRNA + (sulfur carrier)-SH + AH2 + 2 S-adenosyl-L-methionine = 2-methylsulfanyl-N(6)-dimethylallyladenosine(37) in tRNA + (sulfur carrier)-H + 5'-deoxyadenosine + L-methionine + A + S-adenosyl-L-homocysteine + 2 H(+). Its function is as follows. Catalyzes the methylthiolation of N6-(dimethylallyl)adenosine (i(6)A), leading to the formation of 2-methylthio-N6-(dimethylallyl)adenosine (ms(2)i(6)A) at position 37 in tRNAs that read codons beginning with uridine. This is tRNA-2-methylthio-N(6)-dimethylallyladenosine synthase from Akkermansia muciniphila (strain ATCC BAA-835 / DSM 22959 / JCM 33894 / BCRC 81048 / CCUG 64013 / CIP 107961 / Muc).